A 327-amino-acid polypeptide reads, in one-letter code: MTDEIDKAPHIPVLLGAILREVAPVSGVWLDGTFGAGGYARGLLEGGADTVIGVDRDPLAFEMAADWAGSYGDALRLKEGTFSNLDTLADEPLDGVALDLGVSSMQLDLAERGFSFMRDGPLDMRMGQIGVSAEDLVNDAPEKLLADILFQYGEERAARRIAKAIVAERLKCRINSTLQLAGIVEKCLPSKKPGQSHPATRSFQAIRIAVNDEFGQLAQGLMAAERALRPGGKLAVVTFHSSEDRIVKKFMSERSSTGGGGSRYAPEAAAKVPGFTLTPRKAIPPDADEIARNTRARSAKLRIATRTDAPAQPVAPETLGLPQLEGF.

S-adenosyl-L-methionine-binding positions include 37–39, Asp-55, Phe-82, Asp-99, and Gln-106; that span reads GGY. The segment at 303–327 is disordered; it reads IATRTDAPAQPVAPETLGLPQLEGF.

Belongs to the methyltransferase superfamily. RsmH family.

The protein localises to the cytoplasm. The enzyme catalyses cytidine(1402) in 16S rRNA + S-adenosyl-L-methionine = N(4)-methylcytidine(1402) in 16S rRNA + S-adenosyl-L-homocysteine + H(+). Its function is as follows. Specifically methylates the N4 position of cytidine in position 1402 (C1402) of 16S rRNA. The protein is Ribosomal RNA small subunit methyltransferase H of Jannaschia sp. (strain CCS1).